We begin with the raw amino-acid sequence, 576 residues long: Aspartate--tRNA ligase (576 aa).

Glutamate 170 is an L-aspartate binding site. Positions 194-197 (QLFK) are aspartate. Arginine 216 provides a ligand contact to L-aspartate. ATP contacts are provided by residues 216–218 (RDE) and glutamine 225. L-aspartate is bound at residue histidine 438. Glutamate 471 provides a ligand contact to ATP. Residue arginine 478 coordinates L-aspartate. 523-526 (GLDR) is an ATP binding site.

This sequence belongs to the class-II aminoacyl-tRNA synthetase family. Type 1 subfamily. In terms of assembly, homodimer.

The protein localises to the cytoplasm. It catalyses the reaction tRNA(Asp) + L-aspartate + ATP = L-aspartyl-tRNA(Asp) + AMP + diphosphate. Functionally, catalyzes the attachment of L-aspartate to tRNA(Asp) in a two-step reaction: L-aspartate is first activated by ATP to form Asp-AMP and then transferred to the acceptor end of tRNA(Asp). The chain is Aspartate--tRNA ligase from Fervidobacterium nodosum (strain ATCC 35602 / DSM 5306 / Rt17-B1).